A 290-amino-acid chain; its full sequence is Protein MGF 110-9L (290 aa).

An N-terminal signal peptide occupies residues 1–19; the sequence is MKVIVLLLVLAVMQPVIQS. An A repeat occupies 1-160; it reads MKVIVLLLVL…QYSRMRMQAA (160 aa). The next 2 membrane-spanning stretches (helical) occupy residues 128 to 148 and 163 to 183; these read VENI…IGYV and LLIF…IIMN. A B repeat occupies 161-290; the sequence is TRLLIFLGLY…KRHVINQDDL (130 aa).

It belongs to the asfivirus MGF 110 family.

It is found in the membrane. The chain is Protein MGF 110-9L from Ornithodoros (relapsing fever ticks).